Consider the following 281-residue polypeptide: MEMO1 family protein Pars_0062 (281 aa).

Belongs to the MEMO1 family.

The polypeptide is MEMO1 family protein Pars_0062 (Pyrobaculum arsenaticum (strain DSM 13514 / JCM 11321 / PZ6)).